The primary structure comprises 297 residues: Acetyl-coenzyme A carboxylase carboxyl transferase subunit beta (297 aa).

Positions 25–294 constitute a CoA carboxyltransferase N-terminal domain; sequence LWVKCPETGQ…LPPKGRLPRP (270 aa).

Belongs to the AccD/PCCB family. In terms of assembly, acetyl-CoA carboxylase is a heterohexamer composed of biotin carboxyl carrier protein (AccB), biotin carboxylase (AccC) and two subunits each of ACCase subunit alpha (AccA) and ACCase subunit beta (AccD).

The protein resides in the cytoplasm. It catalyses the reaction N(6)-carboxybiotinyl-L-lysyl-[protein] + acetyl-CoA = N(6)-biotinyl-L-lysyl-[protein] + malonyl-CoA. The protein operates within lipid metabolism; malonyl-CoA biosynthesis; malonyl-CoA from acetyl-CoA: step 1/1. Functionally, component of the acetyl coenzyme A carboxylase (ACC) complex. Biotin carboxylase (BC) catalyzes the carboxylation of biotin on its carrier protein (BCCP) and then the CO(2) group is transferred by the transcarboxylase to acetyl-CoA to form malonyl-CoA. The sequence is that of Acetyl-coenzyme A carboxylase carboxyl transferase subunit beta from Xanthobacter autotrophicus (strain ATCC BAA-1158 / Py2).